The primary structure comprises 176 residues: ATP-dependent protease subunit HslV (176 aa).

T5 is a catalytic residue. Na(+) is bound by residues A161, C164, and T167.

The protein belongs to the peptidase T1B family. HslV subfamily. A double ring-shaped homohexamer of HslV is capped on each side by a ring-shaped HslU homohexamer. The assembly of the HslU/HslV complex is dependent on binding of ATP.

It is found in the cytoplasm. The catalysed reaction is ATP-dependent cleavage of peptide bonds with broad specificity.. With respect to regulation, allosterically activated by HslU binding. In terms of biological role, protease subunit of a proteasome-like degradation complex believed to be a general protein degrading machinery. This chain is ATP-dependent protease subunit HslV, found in Desulforamulus reducens (strain ATCC BAA-1160 / DSM 100696 / MI-1) (Desulfotomaculum reducens).